We begin with the raw amino-acid sequence, 383 residues long: Peroxisomal membrane protein PEX15 (383 aa).

Residues 1 to 331 (MAASEIMNNL…AVLKHHFTRS (331 aa)) lie on the Cytoplasmic side of the membrane. The chain crosses the membrane as a helical span at residues 332 to 349 (VLNKNGLLLTGLLLLLCL). The Lumenal segment spans residues 350-383 (KKYKSLMAIFKHVPAAFHTVYPQIVGLLKLLASI).

In terms of assembly, interacts with PEX6. Interacts with PEX19; targets PEX15 to the peroxisome. In terms of processing, phosphorylated.

It localises to the peroxisome membrane. Its subcellular location is the endoplasmic reticulum membrane. Peroxisomal docking factor that anchors PEX1 and PEX6 to peroxisome membranes. PEX26 is therefore required for the formation of the PEX1-PEX6 AAA ATPase complex, a complex that mediates the extraction of the PEX5 receptor from peroxisomal membrane. This chain is Peroxisomal membrane protein PEX15 (PEX15), found in Saccharomyces cerevisiae (strain ATCC 204508 / S288c) (Baker's yeast).